Consider the following 545-residue polypeptide: MTILTQSTTWQALAAHSQQIPHMRELFASDPARFSNMSLSTCGLFLDYSKNRATPETLNLLLTLAQEAKLDAKIKAMFAGDIINTTEKRAVLHTALRSTAEQTIIAEGQDIVPEVQQTLNKMQQFVTSVTSGQWKGFTGKTITDIVSIGIGGSFLGPKIVSQALRPYWMTGLNCHFVANVDGTSISEKLKLLDPETTLFIMSSKSFGTQETLTNTLTAKAWFLAKGGSQSDVAKHFVAVTSNVAKATDFGIDADNIFPMWDWVGGRYSLWSAIGLPIALLIGMDNFRSLLKGAHQMDTHFANAPLAENMPVIMGLFSLWYGNFFNAQSHVVLTYDHYLRGLPAYFQQLDMESNGKSVTLNGTHVDYSTGPVIWGGEGTNGQHAYHQLLHQGTALIPADFIMPLQSHNPIGEHHDQLASNCFGQTQALMQGRTLDEALAELSKSNLSDEEKLLIAKHKVMPGNKPSNTLLMDKLTPETLGALIALYEHRTFVQGAIWDINSFDQWGVELGKSLGNDVLARIGAEQDATALDASSNGLINLYRQGKI.

Glu351 acts as the Proton donor in catalysis. Residues His382 and Lys510 contribute to the active site.

This sequence belongs to the GPI family.

It is found in the cytoplasm. It carries out the reaction alpha-D-glucose 6-phosphate = beta-D-fructose 6-phosphate. It functions in the pathway carbohydrate biosynthesis; gluconeogenesis. It participates in carbohydrate degradation; glycolysis; D-glyceraldehyde 3-phosphate and glycerone phosphate from D-glucose: step 2/4. Catalyzes the reversible isomerization of glucose-6-phosphate to fructose-6-phosphate. This chain is Glucose-6-phosphate isomerase, found in Shewanella sp. (strain ANA-3).